The sequence spans 223 residues: Probable iron-sulfur cluster repair protein HI_1677 (223 aa).

It belongs to the RIC family.

Its subcellular location is the cytoplasm. Di-iron-containing protein involved in the repair of iron-sulfur clusters. The protein is Probable iron-sulfur cluster repair protein HI_1677 of Haemophilus influenzae (strain ATCC 51907 / DSM 11121 / KW20 / Rd).